Here is a 390-residue protein sequence, read N- to C-terminus: MTIRKMTELNITEKRILIRSDLNVPIENGIIQSDARILAALPTIELALQKKAKVIIMSHLGRPKEGYYTKKYSLFPIFEYFKKKFNNTKIYFSNNFLDGIKLNPGEIALLENTRFNKGELNNDEQLSKKYSDLCDIFVMDAFGSSHRMQSSTYGIGKFVKIACAGLLLISEIDALKKALKKPKRPMVAIVGGSKVSTKFNVLNKLSKIADTIIVGGGIANTFLAIDYKIGKSLYEPDFVFEAKKLRDKYNIIVPIDSRVGKNFCKNEQAIIKSPDNIKEDEEIMDFGDESIKKIISIITQSQTIMWNGPVGVFEFPNFRKGTEMIAKTIANSNAFSIAGGGDTLSVIDMFNIKNNISYISTGGGAFLEFIEGKKLPAIQMLEENFKNKSK.

Substrate is bound by residues 21–23 (DLN), R36, 59–62 (HLGR), R114, and R147. ATP is bound by residues K198, E314, and 340–343 (GGDT).

Belongs to the phosphoglycerate kinase family. As to quaternary structure, monomer.

Its subcellular location is the cytoplasm. The catalysed reaction is (2R)-3-phosphoglycerate + ATP = (2R)-3-phospho-glyceroyl phosphate + ADP. Its pathway is carbohydrate degradation; glycolysis; pyruvate from D-glyceraldehyde 3-phosphate: step 2/5. The protein is Phosphoglycerate kinase of Buchnera aphidicola subsp. Acyrthosiphon pisum (strain 5A).